A 264-amino-acid polypeptide reads, in one-letter code: 3-methyl-2-oxobutanoate hydroxymethyltransferase (264 aa).

Asp-45 and Asp-84 together coordinate Mg(2+). 3-methyl-2-oxobutanoate is bound by residues 45-46 (DS), Asp-84, and Lys-112. Glu-114 serves as a coordination point for Mg(2+). The active-site Proton acceptor is Glu-181.

It belongs to the PanB family. Homodecamer; pentamer of dimers. It depends on Mg(2+) as a cofactor.

It localises to the cytoplasm. It carries out the reaction 3-methyl-2-oxobutanoate + (6R)-5,10-methylene-5,6,7,8-tetrahydrofolate + H2O = 2-dehydropantoate + (6S)-5,6,7,8-tetrahydrofolate. It functions in the pathway cofactor biosynthesis; (R)-pantothenate biosynthesis; (R)-pantoate from 3-methyl-2-oxobutanoate: step 1/2. Its function is as follows. Catalyzes the reversible reaction in which hydroxymethyl group from 5,10-methylenetetrahydrofolate is transferred onto alpha-ketoisovalerate to form ketopantoate. The chain is 3-methyl-2-oxobutanoate hydroxymethyltransferase from Escherichia coli O157:H7.